The following is a 132-amino-acid chain: Small ribosomal subunit protein uS8 (132 aa).

It belongs to the universal ribosomal protein uS8 family. As to quaternary structure, part of the 30S ribosomal subunit. Contacts proteins S5 and S12.

Functionally, one of the primary rRNA binding proteins, it binds directly to 16S rRNA central domain where it helps coordinate assembly of the platform of the 30S subunit. The polypeptide is Small ribosomal subunit protein uS8 (Azorhizobium caulinodans (strain ATCC 43989 / DSM 5975 / JCM 20966 / LMG 6465 / NBRC 14845 / NCIMB 13405 / ORS 571)).